The chain runs to 326 residues: MKHFLRMLIQVCLYFYCKFLWRCMKFVMRKLTGRCELQRICYGTKPGASRTMKIETSLRDSKSKLLQTSVSVHPDAIEKTIDDIMELKKINPDINPQLGISLQACLLQIVGYRNLIADVEKLRREPYDSDNPQHEEMLLKLWELLKPNTPLESRVSKQWCEIGFQGDDPKTDFRGMGLLGLYNLQYFAERDATVAQQVLSDSVHPKCSKFSKIEWEKKKMDKAIGYSFAIVGINITDLAYNLLVSGALKTHFYNIAPEAPTLSHFQQTFCYLMHEFHKFWIEEDPMDIMEFNRVREKFRKRIIKQLQNPDMALCPHFAASEGLINM.

In terms of domain architecture, ELMO spans 133–306 (QHEEMLLKLW…KFRKRIIKQL (174 aa)).

Functionally, acts as a GTPase-activating protein (GAP) toward guanine nucleotide exchange factors like ARL2, ARL3, ARF1 and ARF6, but not for GTPases outside the Arf family. The polypeptide is ELMO domain-containing protein 1 (Elmod1) (Mus musculus (Mouse)).